The primary structure comprises 107 residues: MGRKRLITDSYPVVKRREGSAGHSKGELAPDLGEEPLPLSVDEEELELLRQFDLAWQYGPCTGITRLQRWHRAEQMGLKPPPEVHQVLQSHPGDPRFQCSLWHFYPL.

A PCNA-interaction protein motif (PIP box) motif is present at residues M1–R16. Residues M1–E35 form a disordered region. Over residues K15–L28 the composition is skewed to basic and acidic residues.

This sequence belongs to the DNA polymerase delta subunit 4 family. Component of the tetrameric DNA polymerase delta complex (Pol-delta4), which consists of POLD1/p125, POLD2/p50, POLD3/p66/p68 and POLD4/p12, with POLD1 bearing DNA polymerase and 3' to 5' proofreading exonuclease activities. Within this complex, directly interacts with POLD1 and POLD2. Directly interacts with PCNA, as do POLD1 and POLD3; this interaction stimulates Pol-delta4 polymerase activity. As POLD1 and POLD2, directly interacts with WRNIP1; this interaction stimulates DNA polymerase delta-mediated DNA synthesis, independently of the presence of PCNA, possibly by increasing initiation frequency. Upon genotoxic stress induced by DNA damaging agents or by replication stress, POLD4 is proteolytically degraded and Pol-delta4 is converted into a trimeric form of the complex (Pol-delta3) that has an increased proofreading activity. The DNA polymerase delta complex interacts with POLDIP2; this interaction is probably mediated through direct binding to POLD2. In terms of processing, ubiquitinated; undergoes 'Lys-48'-linked ubiquitination in response to UV irradiation, leading to proteasomal degradation. This modification is partly mediated by RNF8 and by the DCX(DTL) E3 ubiquitin ligase complex (also called CRL4(CDT2)). Efficient degradation requires the presence of PCNA and is required for the inhibition of fork progression after DNA damage.

The protein localises to the nucleus. Its function is as follows. As a component of the tetrameric DNA polymerase delta 4 complex (Pol-delta4), plays a role in high fidelity genome replication and repair. Within this complex, increases the rate of DNA synthesis and decreases fidelity by regulating POLD1 polymerase and proofreading 3' to 5' exonuclease activity. Pol-delta4 participates in Okazaki fragment processing, through both the short flap pathway, as well as a nick translation system. Under conditions of DNA replication stress, required for the repair of broken replication forks through break-induced replication (BIR), a mechanism that may induce segmental genomic duplications of up to 200 kb. Involved in Pol-delta4 translesion synthesis (TLS) of templates carrying O6-methylguanine or abasic sites. Its degradation in response to DNA damage is required for the inhibition of fork progression and cell survival. In Bos taurus (Bovine), this protein is DNA polymerase delta subunit 4 (POLD4).